A 551-amino-acid polypeptide reads, in one-letter code: Arginine--tRNA ligase (551 aa).

The 'HIGH' region motif lies at 125–135; that stretch reads ANPTGPLHIGH.

It belongs to the class-I aminoacyl-tRNA synthetase family. As to quaternary structure, monomer.

It is found in the cytoplasm. The catalysed reaction is tRNA(Arg) + L-arginine + ATP = L-arginyl-tRNA(Arg) + AMP + diphosphate. This chain is Arginine--tRNA ligase, found in Nitratidesulfovibrio vulgaris (strain ATCC 29579 / DSM 644 / CCUG 34227 / NCIMB 8303 / VKM B-1760 / Hildenborough) (Desulfovibrio vulgaris).